We begin with the raw amino-acid sequence, 202 residues long: Small ribosomal subunit protein uS4 (202 aa).

The segment at 22–43 is disordered; it reads TRKNARRAYPPGQHGQNRRKRS. The S4 RNA-binding domain occupies 90–152; it reads MRLDNTVFRL…DKSRKLVQAN (63 aa).

It belongs to the universal ribosomal protein uS4 family. In terms of assembly, part of the 30S ribosomal subunit. Contacts protein S5. The interaction surface between S4 and S5 is involved in control of translational fidelity.

In terms of biological role, one of the primary rRNA binding proteins, it binds directly to 16S rRNA where it nucleates assembly of the body of the 30S subunit. Functionally, with S5 and S12 plays an important role in translational accuracy. In Gloeothece citriformis (strain PCC 7424) (Cyanothece sp. (strain PCC 7424)), this protein is Small ribosomal subunit protein uS4.